The chain runs to 408 residues: UDP-N-acetylglucosamine--N-acetylmuramyl-(pentapeptide) pyrophosphoryl-undecaprenol N-acetylglucosamine transferase (408 aa).

A disordered region spans residues 1-20 (MNDTVKKPTGGRGDDPLPAG). Residues 41–43 (TAG), asparagine 160, arginine 197, serine 231, and glutamine 327 each bind UDP-N-acetyl-alpha-D-glucosamine.

It belongs to the glycosyltransferase 28 family. MurG subfamily.

It localises to the cell membrane. The catalysed reaction is di-trans,octa-cis-undecaprenyl diphospho-N-acetyl-alpha-D-muramoyl-L-alanyl-D-glutamyl-meso-2,6-diaminopimeloyl-D-alanyl-D-alanine + UDP-N-acetyl-alpha-D-glucosamine = di-trans,octa-cis-undecaprenyl diphospho-[N-acetyl-alpha-D-glucosaminyl-(1-&gt;4)]-N-acetyl-alpha-D-muramoyl-L-alanyl-D-glutamyl-meso-2,6-diaminopimeloyl-D-alanyl-D-alanine + UDP + H(+). It participates in cell wall biogenesis; peptidoglycan biosynthesis. Cell wall formation. Catalyzes the transfer of a GlcNAc subunit on undecaprenyl-pyrophosphoryl-MurNAc-pentapeptide (lipid intermediate I) to form undecaprenyl-pyrophosphoryl-MurNAc-(pentapeptide)GlcNAc (lipid intermediate II). The chain is UDP-N-acetylglucosamine--N-acetylmuramyl-(pentapeptide) pyrophosphoryl-undecaprenol N-acetylglucosamine transferase from Mycobacterium avium (strain 104).